Consider the following 170-residue polypeptide: Acetyl-CoA decarbonylase/synthase complex subunit epsilon 2 (170 aa).

This sequence belongs to the CdhB family. As to quaternary structure, heterotetramer of two alpha and two epsilon subunits. The ACDS complex is made up of alpha, epsilon, beta, gamma and delta subunits with a probable stoichiometry of (alpha(2)epsilon(2))(4)-beta(8)-(gamma(1)delta(1))(8).

It participates in one-carbon metabolism; methanogenesis from acetate. Part of a complex that catalyzes the reversible cleavage of acetyl-CoA, allowing growth on acetate as sole source of carbon and energy. The alpha-epsilon subcomponent functions as a carbon monoxide dehydrogenase. The precise role of the epsilon subunit is unclear; it may have a stabilizing role within the alpha(2)epsilon(2) component and/or be involved in electron transfer to FAD during a potential FAD-mediated CO oxidation. This is Acetyl-CoA decarbonylase/synthase complex subunit epsilon 2 (cdhB2) from Methanosarcina thermophila.